A 373-amino-acid chain; its full sequence is Lipoyl synthase (373 aa).

The segment at 12–36 (HVVSNDHPSSSPLQPGVKQSGEDKI) is disordered. Positions 81, 86, 92, 107, 111, 114, and 323 each coordinate [4Fe-4S] cluster. The 220-residue stretch at 93 to 312 (FSHGTATFMI…EEYGMALGFS (220 aa)) folds into the Radical SAM core domain. The tract at residues 346-373 (PAVSSTEHRERHTIASKSASKTESIPHR) is disordered. Over residues 360-373 (ASKSASKTESIPHR) the composition is skewed to polar residues.

This sequence belongs to the radical SAM superfamily. Lipoyl synthase family. The cofactor is [4Fe-4S] cluster.

The protein resides in the cytoplasm. The catalysed reaction is [[Fe-S] cluster scaffold protein carrying a second [4Fe-4S](2+) cluster] + N(6)-octanoyl-L-lysyl-[protein] + 2 oxidized [2Fe-2S]-[ferredoxin] + 2 S-adenosyl-L-methionine + 4 H(+) = [[Fe-S] cluster scaffold protein] + N(6)-[(R)-dihydrolipoyl]-L-lysyl-[protein] + 4 Fe(3+) + 2 hydrogen sulfide + 2 5'-deoxyadenosine + 2 L-methionine + 2 reduced [2Fe-2S]-[ferredoxin]. Its pathway is protein modification; protein lipoylation via endogenous pathway; protein N(6)-(lipoyl)lysine from octanoyl-[acyl-carrier-protein]: step 2/2. Its function is as follows. Catalyzes the radical-mediated insertion of two sulfur atoms into the C-6 and C-8 positions of the octanoyl moiety bound to the lipoyl domains of lipoate-dependent enzymes, thereby converting the octanoylated domains into lipoylated derivatives. This is Lipoyl synthase from Xylella fastidiosa (strain M12).